A 164-amino-acid polypeptide reads, in one-letter code: PTS system sorbose-specific EIIB component (164 aa).

One can recognise a PTS EIIB type-4 domain in the interval 1–164; sequence MQITLARIDD…DKINETAFCE (164 aa). The active-site Pros-phosphohistidine intermediate is histidine 14. Histidine 14 carries the post-translational modification Phosphohistidine; by EIIA.

Dimer of dimers.

Its subcellular location is the cytoplasm. It carries out the reaction keto-L-sorbose(out) + N(pros)-phospho-L-histidyl-[protein] = L-sorbose 1-phosphate(in) + L-histidyl-[protein]. Its function is as follows. The phosphoenolpyruvate-dependent sugar phosphotransferase system (PTS), a major carbohydrate active transport system, catalyzes the phosphorylation of incoming sugar substrates concomitant with their translocation across the cell membrane. The enzyme II SorABFM PTS system is involved in L-sorbose transport. The sequence is that of PTS system sorbose-specific EIIB component from Klebsiella pneumoniae.